Consider the following 292-residue polypeptide: Glycine--tRNA ligase alpha subunit (292 aa).

Belongs to the class-II aminoacyl-tRNA synthetase family. Tetramer of two alpha and two beta subunits.

It localises to the cytoplasm. The enzyme catalyses tRNA(Gly) + glycine + ATP = glycyl-tRNA(Gly) + AMP + diphosphate. The sequence is that of Glycine--tRNA ligase alpha subunit from Geobacter sulfurreducens (strain ATCC 51573 / DSM 12127 / PCA).